Reading from the N-terminus, the 88-residue chain is uncharacterized protein (88 aa).

Transmembrane regions (helical) follow at residues 8-28 (IFLS…SIFF) and 45-65 (ELLR…VINL).

It localises to the membrane. This is an uncharacterized protein from Saccharomyces cerevisiae (strain ATCC 204508 / S288c) (Baker's yeast).